A 276-amino-acid polypeptide reads, in one-letter code: Probable endonuclease 4 (276 aa).

Residues H70, H108, E144, D177, H180, H211, D224, H226, and E256 each coordinate Zn(2+).

This sequence belongs to the AP endonuclease 2 family. It depends on Zn(2+) as a cofactor.

It carries out the reaction Endonucleolytic cleavage to 5'-phosphooligonucleotide end-products.. Its function is as follows. Endonuclease IV plays a role in DNA repair. It cleaves phosphodiester bonds at apurinic or apyrimidinic (AP) sites, generating a 3'-hydroxyl group and a 5'-terminal sugar phosphate. The sequence is that of Probable endonuclease 4 from Metamycoplasma arthritidis (strain 158L3-1) (Mycoplasma arthritidis).